A 603-amino-acid polypeptide reads, in one-letter code: ATP-dependent lipid A-core flippase (603 aa).

4 helical membrane-spanning segments follow: residues 20–40 (LGYV…FLIF), 79–99 (LVYA…LGSF), 170–190 (VFLF…MLAI), and 269–289 (PMLQ…VLWL). In terms of domain architecture, ABC transmembrane type-1 spans 31-324 (LLSIVGFLIF…LSEVSSTVQR (294 aa)). Residues 356 to 592 (LEVRNLSFRY…NGHYARLHAM (237 aa)) enclose the ABC transporter domain. 390–397 (GRSGSGKS) lines the ATP pocket.

This sequence belongs to the ABC transporter superfamily. Lipid exporter (TC 3.A.1.106) family. As to quaternary structure, homodimer.

It localises to the cell inner membrane. The catalysed reaction is ATP + H2O + lipid A-core oligosaccharideSide 1 = ADP + phosphate + lipid A-core oligosaccharideSide 2.. Involved in lipopolysaccharide (LPS) biosynthesis. Translocates lipid A-core from the inner to the outer leaflet of the inner membrane. Transmembrane domains (TMD) form a pore in the inner membrane and the ATP-binding domain (NBD) is responsible for energy generation. This Pseudomonas aeruginosa (strain ATCC 15692 / DSM 22644 / CIP 104116 / JCM 14847 / LMG 12228 / 1C / PRS 101 / PAO1) protein is ATP-dependent lipid A-core flippase.